Here is a 267-residue protein sequence, read N- to C-terminus: Sorbitol-6-phosphate 2-dehydrogenase (267 aa).

An NAD(+)-binding site is contributed by 9 to 38; it reads DNVIIVTGGASGIGLAIVDELLSQGAHVQM. Ser-147 serves as a coordination point for substrate. Residue Tyr-160 is the Proton acceptor of the active site.

It belongs to the short-chain dehydrogenases/reductases (SDR) family. In terms of assembly, homotetramer.

The catalysed reaction is D-sorbitol 6-phosphate + NAD(+) = beta-D-fructose 6-phosphate + NADH + H(+). The protein operates within carbohydrate metabolism; D-sorbitol degradation; D-fructose 6-phosphate from D-sorbitol 6-phosphate: step 1/1. The chain is Sorbitol-6-phosphate 2-dehydrogenase (sorD) from Klebsiella pneumoniae.